The following is a 187-amino-acid chain: Translation machinery-associated protein 22 (187 aa).

An SUI1 domain is found at 94 to 165 (VTIKRIERNK…EIEEFILEKY (72 aa)).

Belongs to the DENR family. In terms of assembly, interacts with the 40S ribosomal subunit.

The protein resides in the cytoplasm. The protein is Translation machinery-associated protein 22 (tma-22) of Neurospora crassa (strain ATCC 24698 / 74-OR23-1A / CBS 708.71 / DSM 1257 / FGSC 987).